We begin with the raw amino-acid sequence, 508 residues long: Proline--tRNA ligase 2 (508 aa).

It belongs to the class-II aminoacyl-tRNA synthetase family. ProS type 3 subfamily. Homodimer.

Its subcellular location is the cytoplasm. The enzyme catalyses tRNA(Pro) + L-proline + ATP = L-prolyl-tRNA(Pro) + AMP + diphosphate. Catalyzes the attachment of proline to tRNA(Pro) in a two-step reaction: proline is first activated by ATP to form Pro-AMP and then transferred to the acceptor end of tRNA(Pro). This is Proline--tRNA ligase 2 from Bacillus anthracis.